Consider the following 563-residue polypeptide: BOS complex subunit NCLN (563 aa).

The signal sequence occupies residues 1 to 42 (MLEEAGEVLENVLKASCLPLGFIVFLPAVLLLVAPPLPAADA). The Lumenal portion of the chain corresponds to 43–522 (AHEFTVYRMQ…VMNAYRVKPA (480 aa)). 2 N-linked (GlcNAc...) asparagine glycosylation sites follow: asparagine 241 and asparagine 428. Residues 523-543 (IFDLLLALCIGAYLGMAYTAV) traverse the membrane as a helical segment. Residues 544-563 (QHFHVLYKTVQRLLLKAKAQ) are Cytoplasmic-facing.

It belongs to the nicastrin family. As to quaternary structure, component of the back of Sec61 (BOS) complex, composed of NCLN/Nicalin, NOMO1 and TMEM147. The BOS complex is part of the multi-pass translocon (MPT) complex, composed of three subcomplexes, the GEL complex (composed of RAB5IF/OPTI and TMCO1), the BOS complex (composed of NCLN/Nicalin, NOMO1 and TMEM147) and the PAT complex (composed of WDR83OS/Asterix and CCDC47). The MPT complex associates with the SEC61 complex.

It is found in the endoplasmic reticulum membrane. Its function is as follows. Component of the multi-pass translocon (MPT) complex that mediates insertion of multi-pass membrane proteins into the lipid bilayer of membranes. The MPT complex takes over after the SEC61 complex: following membrane insertion of the first few transmembrane segments of proteins by the SEC61 complex, the MPT complex occludes the lateral gate of the SEC61 complex to promote insertion of subsequent transmembrane regions. May antagonize Nodal signaling and subsequent organization of axial structures during mesodermal patterning, via its interaction with NOMO. This chain is BOS complex subunit NCLN (Ncln), found in Rattus norvegicus (Rat).